A 307-amino-acid chain; its full sequence is UDP-3-O-acyl-N-acetylglucosamine deacetylase (307 aa).

Zn(2+) contacts are provided by histidine 78, histidine 235, and aspartate 239. The active-site Proton donor is the histidine 262.

This sequence belongs to the LpxC family. It depends on Zn(2+) as a cofactor.

The catalysed reaction is a UDP-3-O-[(3R)-3-hydroxyacyl]-N-acetyl-alpha-D-glucosamine + H2O = a UDP-3-O-[(3R)-3-hydroxyacyl]-alpha-D-glucosamine + acetate. It participates in glycolipid biosynthesis; lipid IV(A) biosynthesis; lipid IV(A) from (3R)-3-hydroxytetradecanoyl-[acyl-carrier-protein] and UDP-N-acetyl-alpha-D-glucosamine: step 2/6. In terms of biological role, catalyzes the hydrolysis of UDP-3-O-myristoyl-N-acetylglucosamine to form UDP-3-O-myristoylglucosamine and acetate, the committed step in lipid A biosynthesis. The protein is UDP-3-O-acyl-N-acetylglucosamine deacetylase of Geotalea uraniireducens (strain Rf4) (Geobacter uraniireducens).